The primary structure comprises 657 residues: MSGYFQKRMLKYPLYGLIAATIILSVITFFFSWWLSALVVVGGIILTVAMFYFEYRLNEDVQLYVSNLTYRIKRSEEEALVEMPMGILLYDEHYKIEWVNPFMSKYFDKAELIGESLEEVGPEFLDVITGNDEKGIMSIAWRDHRFDTIVKRKERILYLYDRTEYYDLNKKFQANKSVFAVIFLDNYDEWAQGMDDRRRSALNNLVTSMLTNWAREHRIYLKRISTDRFMAFLTEEMLKRLEEEKFQILDRIRERTSKQNIPLTLSIGIGYKEDDLIQLADLAQSSLDLALGRGGDQVVIKQPEGKVRFYGGKTNPMEKRTRVRARVISQALQELITQSDQVFVMGHRYPDMDVIGSSLGVMRIAEMNDRNAYVVVEPGKMSPDVKRLMNEIEEYPNVIKNIVTPQVALENITEKSLLVVVDTHKPSMVINKELLDSATNVVVVDHHRRSEEFVGSPVLVYIEPYASSTAELITELFEYQPDLEQVGKIEATALLSGIVVDTKNFTLRTGSRTFDAASYLRSLGADTILVQQFLKEDITTFTQRSRLVESLEIYHDGMAIATGHEDEEFGTVIAAQAADTMLSMEGVQASFVITLRPDKLIGISARSLGQINVQVIMEKLGGGGHLSNAATQLKDVTIAEAEKQLISAIDAYWKGET.

A run of 2 helical transmembrane segments spans residues 13 to 35 and 37 to 53; these read PLYGLIAATIILSVITFFFSWWL and ALVVVGGIILTVAMFYF. Positions 74 to 137 are PAS-like; that stretch reads RSEEEALVEM…ITGNDEKGIM (64 aa). Residues 175–303 enclose the GGDEF domain; that stretch reads NKSVFAVIFL…GGDQVVIKQP (129 aa). Residues 342-498 are DHH; it reads VFVMGHRYPD…IEATALLSGI (157 aa). Positions 347, 351, 353, 422, 446, and 501 each coordinate Mn(2+). The DHHA1 stretch occupies residues 592 to 645; sequence VITLRPDKLIGISARSLGQINVQVIMEKLGGGGHLSNAATQLKDVTIAEAEKQL.

Belongs to the GdpP/PdeA phosphodiesterase family. Heme b is required as a cofactor. The cofactor is Mn(2+).

Its subcellular location is the cell membrane. The enzyme catalyses 3',3'-c-di-AMP + H2O = 5'-O-phosphonoadenylyl-(3'-&gt;5')-adenosine + H(+). In terms of biological role, has phosphodiesterase (PDE) activity against cyclic-di-AMP (c-di-AMP). Overexpression decreases export of c-di-AMP, leads to slightly increased susceptibility to the antibiotic cefuroxime and somewhat slower growth in macrophages. There are at least 2 PDEs for c-di-AMP in this bacteria (this one and pgpH); this may be the major PDE for intracellular growth in host macrophages. During host infection c-di-AMP is secreted into the host cytoplasm which leads to interferon-beta production and secretion by the host. c-di-AMP is a second messenger that mediates growth, cell wall stability and virulence. May monitor cellular heme or NO levels. The chain is Cyclic-di-AMP phosphodiesterase PdeA from Listeria monocytogenes serotype 1/2a (strain 10403S).